The following is a 63-amino-acid chain: Putative antitoxin AF_1084 (63 aa).

The protein belongs to the UPF0165 family.

Possibly the antitoxin component of a type II toxin-antitoxin (TA) system. This chain is Putative antitoxin AF_1084, found in Archaeoglobus fulgidus (strain ATCC 49558 / DSM 4304 / JCM 9628 / NBRC 100126 / VC-16).